Consider the following 207-residue polypeptide: Urease accessory protein UreG (207 aa).

14–21 is a binding site for GTP; it reads GPVGSGKT.

The protein belongs to the SIMIBI class G3E GTPase family. UreG subfamily. In terms of assembly, homodimer. UreD, UreF and UreG form a complex that acts as a GTP-hydrolysis-dependent molecular chaperone, activating the urease apoprotein by helping to assemble the nickel containing metallocenter of UreC. The UreE protein probably delivers the nickel.

It is found in the cytoplasm. In terms of biological role, facilitates the functional incorporation of the urease nickel metallocenter. This process requires GTP hydrolysis, probably effectuated by UreG. The protein is Urease accessory protein UreG of Tolumonas auensis (strain DSM 9187 / NBRC 110442 / TA 4).